The chain runs to 169 residues: S-ribosylhomocysteine lyase (169 aa).

Fe cation contacts are provided by His54, His58, and Cys128.

This sequence belongs to the LuxS family. As to quaternary structure, homodimer. Fe cation is required as a cofactor.

The enzyme catalyses S-(5-deoxy-D-ribos-5-yl)-L-homocysteine = (S)-4,5-dihydroxypentane-2,3-dione + L-homocysteine. In terms of biological role, involved in the synthesis of autoinducer 2 (AI-2) which is secreted by bacteria and is used to communicate both the cell density and the metabolic potential of the environment. The regulation of gene expression in response to changes in cell density is called quorum sensing. Catalyzes the transformation of S-ribosylhomocysteine (RHC) to homocysteine (HC) and 4,5-dihydroxy-2,3-pentadione (DPD). The chain is S-ribosylhomocysteine lyase from Shewanella piezotolerans (strain WP3 / JCM 13877).